An 89-amino-acid polypeptide reads, in one-letter code: Prostaglandin E2 receptor EP3 subtype (89 aa).

A helical membrane pass occupies residues 1 to 18 (GVWLAVLAFALLPVLGVG). Residues 19-48 (QYTIQWPGTWCFISTGPGGNGTNSRQNWGN) lie on the Extracellular side of the membrane. The N-linked (GlcNAc...) asparagine glycan is linked to N38. The chain crosses the membrane as a helical span at residues 49–74 (VFFASDFAILGLSALVVTFACNLATI). Residues 75 to 89 (KALVSRCRAKATASQ) are Cytoplasmic-facing.

Belongs to the G-protein coupled receptor 1 family. In terms of assembly, interacts (via C-terminus) with MKLN1.

The protein resides in the cell membrane. Functionally, receptor for prostaglandin E2 (PGE2). Required for normal development of fever in response to pyrinogens, including IL1B, prostaglandin E2 and bacterial lipopolysaccharide (LPS). Required for normal potentiation of platelet aggregation by prostaglandin E2, and thus plays a role in the regulation of blood coagulation. Required for increased HCO3(-) secretion in the duodenum in response to mucosal acidification, and thereby contributes to the protection of the mucosa against acid-induced ulceration. Not required for normal kidney function, normal urine volume and osmolality. The chain is Prostaglandin E2 receptor EP3 subtype (PTGER3) from Ovis aries (Sheep).